The sequence spans 592 residues: Putative phosphatidylinositol 4-kinase alpha-like protein P2 (592 aa).

Residues 180–318 (EQLVEENTGS…ISWQAAIFKL (139 aa)) are pleckstrin homology (PH) domain conferring phosphoinositide binding specificity. In terms of domain architecture, PI3K/PI4K catalytic spans 275–576 (KVKRCGVSEL…VIQSCFLSNR (302 aa)). The G-loop stretch occupies residues 281 to 287 (VSELEKE). Residues 441-449 (QIKDRHNGN) form a catalytic loop region. Positions 460-484 (HIDFGFMFESSPGGNLGWEPDIKLT) are activation loop.

This sequence belongs to the PI3/PI4-kinase family. Type III PI4K subfamily.

This is Putative phosphatidylinositol 4-kinase alpha-like protein P2 (PI4KAP2) from Homo sapiens (Human).